The following is a 471-amino-acid chain: Ribulose bisphosphate carboxylase large chain (471 aa).

Positions 1–2 (MS) are excised as a propeptide. An N-acetylproline modification is found at Pro-3. N6,N6,N6-trimethyllysine is present on Lys-14. Residues Asn-123 and Thr-173 each contribute to the substrate site. Residue Lys-175 is the Proton acceptor of the active site. Lys-177 is a binding site for substrate. Residues Lys-201, Asp-203, and Glu-204 each coordinate Mg(2+). An N6-carboxylysine modification is found at Lys-201. Catalysis depends on His-294, which acts as the Proton acceptor. Residues Arg-295, His-327, and Ser-379 each contribute to the substrate site.

This sequence belongs to the RuBisCO large chain family. Type I subfamily. As to quaternary structure, heterohexadecamer of 8 large chains and 8 small chains; disulfide-linked. The disulfide link is formed within the large subunit homodimers. The cofactor is Mg(2+). Post-translationally, the disulfide bond which can form in the large chain dimeric partners within the hexadecamer appears to be associated with oxidative stress and protein turnover.

It is found in the plastid. It localises to the chloroplast. It carries out the reaction 2 (2R)-3-phosphoglycerate + 2 H(+) = D-ribulose 1,5-bisphosphate + CO2 + H2O. The catalysed reaction is D-ribulose 1,5-bisphosphate + O2 = 2-phosphoglycolate + (2R)-3-phosphoglycerate + 2 H(+). Its function is as follows. RuBisCO catalyzes two reactions: the carboxylation of D-ribulose 1,5-bisphosphate, the primary event in carbon dioxide fixation, as well as the oxidative fragmentation of the pentose substrate in the photorespiration process. Both reactions occur simultaneously and in competition at the same active site. This is Ribulose bisphosphate carboxylase large chain from Drymophloeus subdistichus (Palm tree).